Reading from the N-terminus, the 760-residue chain is MFRSSFDKNLENATSHLRLEPDWPSILLICDEINQKDVTPKNAFAAIKKKMNSPNPHSSCYSLLVLESIVKNCGAPVHEEVFTKENCEMFSSFLESTPHENVRQKMLELVQTWAYAFRSSDKYQAIKDTMTILKAKGHTFPELREADAMFTADTAPNWADGRVCHRCRVEFTFTNRKHHCRNCGQVFCGQCTAKQCPLPKYGIEKEVRVCDGCFAALQRPTSGSGGAKSGPRPADSELPAEYLNSTLAQQVQTPARKTEQELKEEEELQLALALSQSEAEQQKPKLQSLPPAAYRMQQRSPSPEAPPEPKEYHQQPEEATNPELAKYLNRSYWEQRKISESSSMASPSAPSPMPPTPQPQQIMPLQVKSADEVQIDEFAANMRTQVEIFVNRMKSNSSRGRSISNDSSVQTLFMTLTSLHSQQLSYIKEMDDKRMWYEQLQDKLTQIKDSRAALDQLRQEHVEKLRRIAEEQERQRQMQMAQKLDIMRKKKQEYLQYQRQLALQRIQEQEREMQLRQEQQKAQYLMGQSAPPFPYMPPSAVPQHGSPSHQLNNVYNPYAAGVPGYLPQGPAPAPNGHGQFQAIPPGMYNPAIQQPMPPNLQPGGLMQQPAPPGNPQMMPPMPENQFANNPAAILQLPQQHSIAQPPQIPFQPQPQQIPGQQPQQIPGQQPQQIPGQQPQQIPGQQPQQIPVQQPQPQPQMGHVMLQQHQAPPAAQAPPVTEIANNQVQAVAAAPAPPQNEPGPAPVKAEEPATAELISFD.

The VHS domain maps to 13-141 (ATSHLRLEPD…ILKAKGHTFP (129 aa)). The segment at 158-218 (WADGRVCHRC…VCDGCFAALQ (61 aa)) adopts an FYVE-type zinc-finger fold. Zn(2+) is bound by residues Cys164, Cys167, Cys180, Cys183, Cys188, Cys191, Cys210, and Cys213. Positions 263–282 (KEEEELQLALALSQSEAEQQ) constitute a UIM domain. Disordered regions lie at residues 275 to 323 (SQSE…TNPE), 338 to 359 (ISES…TPQP), 602 to 626 (PGGL…ENQF), and 644 to 760 (QPPQ…ISFD). Phosphoserine occurs at positions 300 and 302. A compositionally biased stretch (basic and acidic residues) spans 307-316 (PEPKEYHQQP). Pro residues-rich tracts occupy residues 349–358 (APSPMPPTPQ) and 609–622 (PAPP…PPMP). Low complexity-rich tracts occupy residues 653 to 694 (QPQQ…VQQP) and 706 to 733 (QQHQ…VAAA). Over residues 734-744 (PAPPQNEPGPA) the composition is skewed to pro residues.

In terms of assembly, homodimer; in vitro. Interacts with ubiquitin.

It localises to the cytoplasm. It is found in the cell cortex. The protein resides in the perinuclear region. In terms of biological role, essential role in endosome membrane invagination and formation of multivesicular bodies, MVBs. Required during gastrulation and appears to regulate early embryonic signaling pathways. Inhibits tyrosine kinase receptor signaling by promoting degradation of the tyrosine-phosphorylated, active receptor, potentially by sorting activated receptors into MVBs. The MVBs are then trafficked to the lysosome where their contents are degraded. The protein is Hepatocyte growth factor-regulated tyrosine kinase substrate (Hrs) of Drosophila melanogaster (Fruit fly).